A 311-amino-acid polypeptide reads, in one-letter code: Methionyl-tRNA formyltransferase (311 aa).

110 to 113 (SLLP) provides a ligand contact to (6S)-5,6,7,8-tetrahydrofolate.

The protein belongs to the Fmt family.

The catalysed reaction is L-methionyl-tRNA(fMet) + (6R)-10-formyltetrahydrofolate = N-formyl-L-methionyl-tRNA(fMet) + (6S)-5,6,7,8-tetrahydrofolate + H(+). Attaches a formyl group to the free amino group of methionyl-tRNA(fMet). The formyl group appears to play a dual role in the initiator identity of N-formylmethionyl-tRNA by promoting its recognition by IF2 and preventing the misappropriation of this tRNA by the elongation apparatus. The protein is Methionyl-tRNA formyltransferase of Streptococcus pneumoniae (strain P1031).